The following is a 249-amino-acid chain: 2-C-methyl-D-erythritol 4-phosphate cytidylyltransferase (249 aa).

The protein belongs to the IspD/TarI cytidylyltransferase family. IspD subfamily.

The catalysed reaction is 2-C-methyl-D-erythritol 4-phosphate + CTP + H(+) = 4-CDP-2-C-methyl-D-erythritol + diphosphate. It functions in the pathway isoprenoid biosynthesis; isopentenyl diphosphate biosynthesis via DXP pathway; isopentenyl diphosphate from 1-deoxy-D-xylulose 5-phosphate: step 2/6. In terms of biological role, catalyzes the formation of 4-diphosphocytidyl-2-C-methyl-D-erythritol from CTP and 2-C-methyl-D-erythritol 4-phosphate (MEP). The polypeptide is 2-C-methyl-D-erythritol 4-phosphate cytidylyltransferase (Thermobifida fusca (strain YX)).